The primary structure comprises 691 residues: DNA ligase (691 aa).

Residues 41 to 45 (DAEYD), 90 to 91 (SL), and E130 each bind NAD(+). The N6-AMP-lysine intermediate role is filled by K132. 4 residues coordinate NAD(+): R153, E190, K307, and K331. Zn(2+)-binding residues include C425, C428, C443, and C449. One can recognise a BRCT domain in the interval 610–691 (APQGVLAGKT…LHQLLEGNTR (82 aa)).

This sequence belongs to the NAD-dependent DNA ligase family. LigA subfamily. The cofactor is Mg(2+). Requires Mn(2+) as cofactor.

It carries out the reaction NAD(+) + (deoxyribonucleotide)n-3'-hydroxyl + 5'-phospho-(deoxyribonucleotide)m = (deoxyribonucleotide)n+m + AMP + beta-nicotinamide D-nucleotide.. Functionally, DNA ligase that catalyzes the formation of phosphodiester linkages between 5'-phosphoryl and 3'-hydroxyl groups in double-stranded DNA using NAD as a coenzyme and as the energy source for the reaction. It is essential for DNA replication and repair of damaged DNA. The chain is DNA ligase from Burkholderia multivorans (strain ATCC 17616 / 249).